The primary structure comprises 37 residues: Large ribosomal subunit protein bL36c (37 aa).

Belongs to the bacterial ribosomal protein bL36 family.

The protein resides in the plastid. It localises to the chloroplast. In Nephroselmis olivacea (Green alga), this protein is Large ribosomal subunit protein bL36c (rpl36).